Consider the following 329-residue polypeptide: 4-diphosphocytidyl-2-C-methyl-D-erythritol kinase (329 aa).

The active site involves lysine 14. 117-127 (PSGAGMGGASS) is a binding site for ATP. Aspartate 166 is a catalytic residue.

Belongs to the GHMP kinase family. IspE subfamily.

It catalyses the reaction 4-CDP-2-C-methyl-D-erythritol + ATP = 4-CDP-2-C-methyl-D-erythritol 2-phosphate + ADP + H(+). It functions in the pathway isoprenoid biosynthesis; isopentenyl diphosphate biosynthesis via DXP pathway; isopentenyl diphosphate from 1-deoxy-D-xylulose 5-phosphate: step 3/6. Functionally, catalyzes the phosphorylation of the position 2 hydroxy group of 4-diphosphocytidyl-2C-methyl-D-erythritol. The polypeptide is 4-diphosphocytidyl-2-C-methyl-D-erythritol kinase (Rhodopirellula baltica (strain DSM 10527 / NCIMB 13988 / SH1)).